We begin with the raw amino-acid sequence, 508 residues long: 6-phosphogluconate dehydrogenase, decarboxylating 2, chloroplastic (508 aa).

The transit peptide at 1–12 directs the protein to the chloroplast; that stretch reads MASPAPAPPAAS. NADP(+)-binding positions include 28–33, 51–53, 95–97, and N123; these read GLATMG, NRT, and VQA. Substrate contacts are provided by residues N123 and 149–151; that span reads SGG. The active-site Proton acceptor is the K203. 206–207 serves as a coordination point for substrate; that stretch reads HN. E210 (proton donor) is an active-site residue. 5 residues coordinate substrate: Y211, K284, R311, R475, and H481.

This sequence belongs to the 6-phosphogluconate dehydrogenase family. In terms of assembly, homodimer.

It localises to the plastid. The protein localises to the chloroplast. The catalysed reaction is 6-phospho-D-gluconate + NADP(+) = D-ribulose 5-phosphate + CO2 + NADPH. It participates in carbohydrate degradation; pentose phosphate pathway; D-ribulose 5-phosphate from D-glucose 6-phosphate (oxidative stage): step 3/3. Catalyzes the oxidative decarboxylation of 6-phosphogluconate to ribulose 5-phosphate and CO(2), with concomitant reduction of NADP to NADPH. This Oryza sativa subsp. japonica (Rice) protein is 6-phosphogluconate dehydrogenase, decarboxylating 2, chloroplastic (G6PGH2).